A 522-amino-acid polypeptide reads, in one-letter code: Putative ribose/galactose/methyl galactoside import ATP-binding protein (522 aa).

ABC transporter domains follow at residues Leu-7–Glu-244 and Pro-254–Ala-498. Gly-39–Ser-46 is an ATP binding site.

Belongs to the ABC transporter superfamily. Carbohydrate importer 2 (CUT2) (TC 3.A.1.2) family.

Its subcellular location is the cell membrane. The enzyme catalyses D-ribose(out) + ATP + H2O = D-ribose(in) + ADP + phosphate + H(+). It catalyses the reaction D-galactose(out) + ATP + H2O = D-galactose(in) + ADP + phosphate + H(+). Its function is as follows. Part of an ABC transporter complex involved in carbohydrate import. Could be involved in ribose, galactose and/or methyl galactoside import. Responsible for energy coupling to the transport system. This chain is Putative ribose/galactose/methyl galactoside import ATP-binding protein, found in Halalkalibacterium halodurans (strain ATCC BAA-125 / DSM 18197 / FERM 7344 / JCM 9153 / C-125) (Bacillus halodurans).